Here is a 414-residue protein sequence, read N- to C-terminus: Trafficking protein particle complex subunit 13 (414 aa).

It belongs to the TRAPPC13 family. As to quaternary structure, part of the multisubunit TRAPP (transport protein particle) complex.

The protein is Trafficking protein particle complex subunit 13 (trappc13) of Xenopus laevis (African clawed frog).